A 430-amino-acid chain; its full sequence is 3-phosphoshikimate 1-carboxyvinyltransferase (430 aa).

The 3-phosphoshikimate site is built by Lys-23, Ser-24, and Arg-28. A phosphoenolpyruvate-binding site is contributed by Lys-23. Positions 95 and 123 each coordinate phosphoenolpyruvate. 3-phosphoshikimate contacts are provided by Ser-169, Gln-171, Asp-315, and Lys-342. Residue Gln-171 participates in phosphoenolpyruvate binding. The active-site Proton acceptor is Asp-315. Phosphoenolpyruvate-binding residues include Arg-346 and Arg-388.

It belongs to the EPSP synthase family. As to quaternary structure, monomer.

It is found in the cytoplasm. The catalysed reaction is 3-phosphoshikimate + phosphoenolpyruvate = 5-O-(1-carboxyvinyl)-3-phosphoshikimate + phosphate. It functions in the pathway metabolic intermediate biosynthesis; chorismate biosynthesis; chorismate from D-erythrose 4-phosphate and phosphoenolpyruvate: step 6/7. Functionally, catalyzes the transfer of the enolpyruvyl moiety of phosphoenolpyruvate (PEP) to the 5-hydroxyl of shikimate-3-phosphate (S3P) to produce enolpyruvyl shikimate-3-phosphate and inorganic phosphate. This is 3-phosphoshikimate 1-carboxyvinyltransferase from Streptococcus pyogenes serotype M6 (strain ATCC BAA-946 / MGAS10394).